The primary structure comprises 130 residues: MTKQNPIADAMSAIKNAGDTGKLAVTVEPASRLFGDMLKVMQEYGYITGFEKIDDGRGGQFQIALSGGINKCGVITPRFSVKVEDLESWEIRYLPGKGFGIIILTTSKGVMSHEQARKLGVGGELLGYVF.

Belongs to the universal ribosomal protein uS8 family. As to quaternary structure, part of the 30S ribosomal subunit.

One of the primary rRNA binding proteins, it binds directly to 16S rRNA central domain where it helps coordinate assembly of the platform of the 30S subunit. In Methanocorpusculum labreanum (strain ATCC 43576 / DSM 4855 / Z), this protein is Small ribosomal subunit protein uS8.